Reading from the N-terminus, the 94-residue chain is Small ribosomal subunit protein bS20 (94 aa).

This sequence belongs to the bacterial ribosomal protein bS20 family.

Functionally, binds directly to 16S ribosomal RNA. The polypeptide is Small ribosomal subunit protein bS20 (Acaryochloris marina (strain MBIC 11017)).